The following is a 553-amino-acid chain: Solute carrier family 2, facilitated glucose transporter member 10 (553 aa).

Topologically, residues 1 to 15 are cytoplasmic; the sequence is MGLRSTTLVLAATSS. Residues 16–36 traverse the membrane as a helical segment; the sequence is LLGGLIFGYELGIISGALLML. The Extracellular portion of the chain corresponds to 37-48; the sequence is KTVFQLTCFEQE. A helical transmembrane segment spans residues 49 to 69; it reads ALVSAVLFGALLASLIGGFII. The Cytoplasmic segment spans residues 70–82; it reads DRSGRRTSIMGSN. Residues 83–103 traverse the membrane as a helical segment; sequence LVVLAGSIILIATSSFWWLVV. Residues 104-105 are Extracellular-facing; sequence GR. A helical membrane pass occupies residues 106-126; that stretch reads VTVGFAISISSMACCIYVSEI. The Cytoplasmic portion of the chain corresponds to 127–132; the sequence is VRPHQR. The helical transmembrane segment at 133–153 threads the bilayer; it reads GTLVSLYETGITVGILISYAM. Over 154–165 the chain is Extracellular; that stretch reads NYFLSAVNDGWK. A helical membrane pass occupies residues 166 to 186; it reads YMFGLAIIPAAFQFIVILFLP. Over 187 to 240 the chain is Cytoplasmic; sequence SKPHTLNFWEQDSDNGFIELEEAGESGEFKPDTYDKQYTFLDLFRSKDNMRTRT. The chain crosses the membrane as a helical span at residues 241-261; the sequence is LLGLGLVLFQQFTGQPNVLYY. A D-glucose-binding site is contributed by 250–251; it reads QQ. Residues 262–277 are Extracellular-facing; sequence ASTIFRSVGFQSNSSA. Residue Asn-274 is glycosylated (N-linked (GlcNAc...) asparagine). The chain crosses the membrane as a helical span at residues 278 to 298; it reads VLASVGLGVVKVASTLIAICF. Topologically, residues 299 to 305 are cytoplasmic; the sequence is ADKAGRR. A helical transmembrane segment spans residues 306 to 326; sequence ILLLAGCIVMTIAISGIGIVS. Over 327-413 the chain is Extracellular; the sequence is FMVELDSHRD…PPAGPDSNYA (87 aa). Asn-344, Asn-351, and Asn-400 each carry an N-linked (GlcNAc...) asparagine glycan. The helical transmembrane segment at 414–434 threads the bilayer; it reads ILNWITLLSMMAFVSAFSIGF. Topologically, residues 435 to 462 are cytoplasmic; the sequence is GPMTWLVLSEIYPADIRGRAFAFCNSFN. Position 439 (Trp-439) interacts with D-glucose. A helical transmembrane segment spans residues 463 to 482; it reads WAANLLITLTFLEVIGSIGL. A topological domain (extracellular) is located at residue Gly-483. Residues 484–504 traverse the membrane as a helical segment; sequence WTFLLYGGVGLLAIAFIYFFI. The Cytoplasmic portion of the chain corresponds to 505-553; the sequence is PETKGQSLEEIDQQLSSKRISKRRETSKGVRKRPSTGPPYQRVGKSNWT. Residues 522 to 553 form a disordered region; it reads KRISKRRETSKGVRKRPSTGPPYQRVGKSNWT.

This sequence belongs to the major facilitator superfamily. Sugar transporter (TC 2.A.1.1) family. Glucose transporter subfamily.

The protein resides in the endomembrane system. Its subcellular location is the cytoplasm. It is found in the perinuclear region. It carries out the reaction D-glucose(out) = D-glucose(in). Facilitative glucose transporter required for the development of the cardiovascular system. The protein is Solute carrier family 2, facilitated glucose transporter member 10 of Xenopus laevis (African clawed frog).